Consider the following 267-residue polypeptide: Undecaprenyl-diphosphatase (267 aa).

The next 7 helical transmembrane spans lie at 7-29 (LILGIIEGLTEFLPVSSTGHMIL), 41-61 (FWKSFLIIIQLGSILAVIFVF), 69-89 (LDIWLKLAAGFFPTGVIGLFV), 96-116 (LFNGWVVVGMLIFGGVVFILI), 173-193 (AAEFSFLLAIPTMIIATAYSI), 207-227 (IPLGIGFITAFVVAVLVIKFF), and 239-259 (FGIYRIILGFVFFYLYYSGIL).

It belongs to the UppP family.

The protein localises to the cell inner membrane. It carries out the reaction di-trans,octa-cis-undecaprenyl diphosphate + H2O = di-trans,octa-cis-undecaprenyl phosphate + phosphate + H(+). Functionally, catalyzes the dephosphorylation of undecaprenyl diphosphate (UPP). Confers resistance to bacitracin. The chain is Undecaprenyl-diphosphatase from Campylobacter jejuni subsp. jejuni serotype O:6 (strain 81116 / NCTC 11828).